Reading from the N-terminus, the 1365-residue chain is Zinc finger protein 423 (1365 aa).

Basic residues predominate over residues 1–11 (MSRRKQAKPRS). The segment at 1–69 (MSRRKQAKPR…SHDERVGEED (69 aa)) is disordered. Over residues 37 to 51 (VSERDSDRKESRAVG) the composition is skewed to basic and acidic residues. The C2H2-type 1 zinc-finger motif lies at 76-98 (FTCDNCQQDFECLADLTEHRTNH). A disordered region spans residues 99–126 (CPADGDDDPGLSWVASSPSSKDVASPSQ). Residues 112-126 (VASSPSSKDVASPSQ) are compositionally biased toward low complexity. 4 C2H2-type zinc fingers span residues 150-172 (YPCQ…EQIH), 178-200 (FKCT…VKLH), 206-228 (YSCQ…LKTH), and 234-256 (FKCS…MQAH). The tract at residues 250-280 (QSHMQAHRKNKEHLAKKDQGKRDGSSSDVTE) is disordered. Positions 261 to 274 (EHLAKKDQGKRDGS) are enriched in basic and acidic residues. 3 C2H2-type zinc fingers span residues 286 to 309 (YMCD…LTQH), 318 to 341 (LQCI…DRTH), and 346 to 368 (HKCP…LDSH). Positions 366 to 429 (DSHRQPDSSN…LAPSSDHDDG (64 aa)) are disordered. Residues 386–400 (SVASMSSATPDSSAS) are compositionally biased toward low complexity. Residues 437–461 (YSCPYCSKRDFNSLAVLEIHLKTIH) form a C2H2-type 9; degenerate zinc finger. 3 consecutive C2H2-type zinc fingers follow at residues 469 to 492 (HTCQ…RKAH), 513 to 536 (FHCN…RVSH), and 555 to 578 (FFCN…QQTH). A C2H2-type 13; atypical zinc finger spans residues 603-628 (YSCPYCTNSPIFGSLLKLTKHIKENH). 7 consecutive C2H2-type zinc fingers follow at residues 675–697 (YPCN…LKSH), 705–728 (QSCP…LTIH), 736–759 (YVCE…LDMH), 764–787 (YHCT…AVKH), 794–817 (YRCT…KHSH), 831–853 (RKCI…ITTH), and 857–880 (YNCR…REKH). Positions 885 to 895 (GGNGNGNGGSQ) are enriched in gly residues. Positions 885–916 (GGNGNGNGGSQNGTPNGVTQSSKRSTAGSTAA) are disordered. Positions 902–913 (VTQSSKRSTAGS) are enriched in polar residues. Residues 954 to 976 (YACDICGAAYTMESLLQNHRLRD) form a C2H2-type 21; degenerate zinc finger. 8 C2H2-type zinc fingers span residues 1000 to 1022 (HKCN…AQTH), 1029 to 1051 (YMCP…KVTH), 1090 to 1112 (FRCV…GTFH), 1201 to 1224 (LRCS…QVDH), 1249 to 1271 (YQCI…VANH), 1279 to 1301 (HECK…LIEH), 1310 to 1333 (FKCP…FAVH), and 1340 to 1363 (YDCS…LSQH).

This sequence belongs to the krueppel C2H2-type zinc-finger protein family.

The protein localises to the nucleus. Functionally, transcription factor that can both act as an activator or a repressor depending on the context. Plays a central role in BMP signaling and olfactory neurogenesis. Associates with SMADs in response to bmp2 leading to activate transcription of BMP target genes. Acts as a transcriptional repressor involved in terminal olfactory receptor neurons differentiation. Involved in olfactory neurogenesis by participating in a developmental switch that regulates the transition from differentiation to maturation in olfactory receptor neurons. In Danio rerio (Zebrafish), this protein is Zinc finger protein 423 (znf423).